The chain runs to 262 residues: Trypsin theta (262 aa).

Residues 1-19 (MHGLVVLLVCLAVGSAFAG) form the signal peptide. Positions 20-34 (TIGVSNADPFEREGR) are cleaved as a propeptide — activation peptide. Positions 35-260 (IVGGEDTTIR…LRKWILNASQ (226 aa)) constitute a Peptidase S1 domain. Residues cysteine 61 and cysteine 77 are joined by a disulfide bond. Active-site charge relay system residues include histidine 76 and aspartate 121. Disulfide bonds link cysteine 186-cysteine 203 and cysteine 212-cysteine 236. Serine 216 serves as the catalytic Charge relay system.

It belongs to the peptidase S1 family.

The protein localises to the secreted. The protein resides in the extracellular space. The enzyme catalyses Preferential cleavage: Arg-|-Xaa, Lys-|-Xaa.. In Drosophila erecta (Fruit fly), this protein is Trypsin theta (thetaTry).